Reading from the N-terminus, the 380-residue chain is Ribosomal RNA large subunit methyltransferase G (380 aa).

Belongs to the methyltransferase superfamily. RlmG family.

The protein resides in the cytoplasm. The enzyme catalyses guanosine(1835) in 23S rRNA + S-adenosyl-L-methionine = N(2)-methylguanosine(1835) in 23S rRNA + S-adenosyl-L-homocysteine + H(+). Its function is as follows. Specifically methylates the guanine in position 1835 (m2G1835) of 23S rRNA. The chain is Ribosomal RNA large subunit methyltransferase G from Aeromonas hydrophila subsp. hydrophila (strain ATCC 7966 / DSM 30187 / BCRC 13018 / CCUG 14551 / JCM 1027 / KCTC 2358 / NCIMB 9240 / NCTC 8049).